We begin with the raw amino-acid sequence, 493 residues long: Galactose-1-phosphate uridylyltransferase (493 aa).

It belongs to the galactose-1-phosphate uridylyltransferase type 2 family.

The protein resides in the cytoplasm. The catalysed reaction is alpha-D-galactose 1-phosphate + UDP-alpha-D-glucose = alpha-D-glucose 1-phosphate + UDP-alpha-D-galactose. It functions in the pathway carbohydrate metabolism; galactose metabolism. In Streptococcus pneumoniae (strain CGSP14), this protein is Galactose-1-phosphate uridylyltransferase.